Consider the following 100-residue polypeptide: Small ribosomal subunit protein uS14c (100 aa).

It belongs to the universal ribosomal protein uS14 family. In terms of assembly, part of the 30S ribosomal subunit.

Its subcellular location is the plastid. It is found in the chloroplast. Binds 16S rRNA, required for the assembly of 30S particles. The chain is Small ribosomal subunit protein uS14c from Calycanthus floridus var. glaucus (Eastern sweetshrub).